The chain runs to 526 residues: Type 2 glycosyltransferase (526 aa).

Residues 25 to 45 (PSFDFWYSSTFWLYLFLGLWF) form a helical membrane-spanning segment. 2 N-linked (GlcNAc...) asparagine glycosylation sites follow: Asn-298 and Asn-317. Transmembrane regions (helical) follow at residues 340–360 (FATFTSLAFLIDPLLLASCWW), 375–395 (WSQFVFMFAFTKVVKLMGLFI), and 403–423 (FLPVSVVFGYFHGLVKLYALI). Asn-426 and Asn-517 each carry an N-linked (GlcNAc...) asparagine glycan.

This sequence belongs to the GT2 glycosyltransferase family.

The protein localises to the cell membrane. The protein resides in the secreted. Its subcellular location is the cell wall. Functionally, glycosyltransferase involved in the maintenance of the outermost surface of the fungal cell wall. Likely functions in the synthesis of a currently unknown, potentially minor but widespread, extracellular or outer cell wall polysaccharide which plays a key role in facilitating many interactions between plants and fungi by enabling hyphal growth on solid matrices. This chain is Type 2 glycosyltransferase, found in Gibberella zeae (strain ATCC MYA-4620 / CBS 123657 / FGSC 9075 / NRRL 31084 / PH-1) (Wheat head blight fungus).